Here is a 127-residue protein sequence, read N- to C-terminus: Protein ApaG (127 aa).

An ApaG domain is found at 3–127; that stretch reads NNPSSKIEVA…FVLSVPRTLH (125 aa).

This Xylella fastidiosa (strain M23) protein is Protein ApaG.